We begin with the raw amino-acid sequence, 160 residues long: SsrA-binding protein (160 aa).

The segment at 134 to 160 (RKAHDKREAVKERDWNRDKARLMRDRG) is disordered. Positions 138 to 160 (DKREAVKERDWNRDKARLMRDRG) are enriched in basic and acidic residues.

The protein belongs to the SmpB family.

The protein localises to the cytoplasm. Required for rescue of stalled ribosomes mediated by trans-translation. Binds to transfer-messenger RNA (tmRNA), required for stable association of tmRNA with ribosomes. tmRNA and SmpB together mimic tRNA shape, replacing the anticodon stem-loop with SmpB. tmRNA is encoded by the ssrA gene; the 2 termini fold to resemble tRNA(Ala) and it encodes a 'tag peptide', a short internal open reading frame. During trans-translation Ala-aminoacylated tmRNA acts like a tRNA, entering the A-site of stalled ribosomes, displacing the stalled mRNA. The ribosome then switches to translate the ORF on the tmRNA; the nascent peptide is terminated with the 'tag peptide' encoded by the tmRNA and targeted for degradation. The ribosome is freed to recommence translation, which seems to be the essential function of trans-translation. This chain is SsrA-binding protein, found in Azorhizobium caulinodans (strain ATCC 43989 / DSM 5975 / JCM 20966 / LMG 6465 / NBRC 14845 / NCIMB 13405 / ORS 571).